The sequence spans 474 residues: 2-succinylbenzoate--CoA ligase (474 aa).

Belongs to the ATP-dependent AMP-binding enzyme family. MenE subfamily.

The catalysed reaction is 2-succinylbenzoate + ATP + CoA = 2-succinylbenzoyl-CoA + AMP + diphosphate. Its pathway is quinol/quinone metabolism; 1,4-dihydroxy-2-naphthoate biosynthesis; 1,4-dihydroxy-2-naphthoate from chorismate: step 5/7. The protein operates within quinol/quinone metabolism; menaquinone biosynthesis. In terms of biological role, converts 2-succinylbenzoate (OSB) to 2-succinylbenzoyl-CoA (OSB-CoA). This Staphylococcus epidermidis (strain ATCC 12228 / FDA PCI 1200) protein is 2-succinylbenzoate--CoA ligase.